The sequence spans 194 residues: Auxin-induced protein 22A (194 aa).

The EAR-like (transcriptional repression) motif lies at 13 to 17 (LRLGL). The tract at residues 40 to 62 (EIDDVGDENSSSGGGGDRKMENK) is disordered. One can recognise a PB1 domain in the interval 85–173 (KMYVKVSMDG…KRLRIMKRAD (89 aa)).

Belongs to the Aux/IAA family. In terms of assembly, homodimers and heterodimers.

The protein localises to the nucleus. In terms of biological role, aux/IAA proteins are short-lived transcriptional factors that function as repressors of early auxin response genes at low auxin concentrations. Repression is thought to result from the interaction with auxin response factors (ARFs), proteins that bind to the auxin-responsive promoter element (AuxRE). Formation of heterodimers with ARF proteins may alter their ability to modulate early auxin response genes expression. This Vigna radiata var. radiata (Mung bean) protein is Auxin-induced protein 22A (AUX22A).